We begin with the raw amino-acid sequence, 366 residues long: Peptide chain release factor 2 (366 aa).

At Gln251 the chain carries N5-methylglutamine.

This sequence belongs to the prokaryotic/mitochondrial release factor family. Post-translationally, methylated by PrmC. Methylation increases the termination efficiency of RF2.

The protein resides in the cytoplasm. In terms of biological role, peptide chain release factor 2 directs the termination of translation in response to the peptide chain termination codons UGA and UAA. The sequence is that of Peptide chain release factor 2 (prfB) from Bacillus subtilis (strain 168).